The chain runs to 481 residues: Dual specificity protein kinase CLK4 (481 aa).

2 disordered regions span residues 1 to 47 and 102 to 143; these read MRHS…KPHH and SKSS…EDDE. Basic and acidic residues predominate over residues 8 to 19; sequence HCPDWDSRESWG. Composition is skewed to basic residues over residues 106 to 119 and 126 to 136; these read VRSRRSSPKRKRNR and SHSKSHRRKRS. Residues S136 and S138 each carry the phosphoserine modification. Positions 159 to 475 constitute a Protein kinase domain; that stretch reads YEIVDTLGEG…LDEALQHPFF (317 aa). ATP contacts are provided by residues 165–173 and K189; that span reads LGEGAFGKV. D286 acts as the Proton acceptor in catalysis.

The protein belongs to the protein kinase superfamily. CMGC Ser/Thr protein kinase family. Lammer subfamily. Interacts with UBL5. Autophosphorylates on all three types of residues. In terms of tissue distribution, expressed in the hippocampus, the cerebellum and the olfactory bulb.

It localises to the nucleus. The enzyme catalyses L-seryl-[protein] + ATP = O-phospho-L-seryl-[protein] + ADP + H(+). It catalyses the reaction L-threonyl-[protein] + ATP = O-phospho-L-threonyl-[protein] + ADP + H(+). The catalysed reaction is L-tyrosyl-[protein] + ATP = O-phospho-L-tyrosyl-[protein] + ADP + H(+). With respect to regulation, TG003 inhibits its kinase activity and affects the regulation of alternative splicing mediated by phosphorylation of SR proteins. Its function is as follows. Dual specificity kinase acting on both serine/threonine and tyrosine-containing substrates. Phosphorylates serine- and arginine-rich (SR) proteins of the spliceosomal complex and may be a constituent of a network of regulatory mechanisms that enable SR proteins to control RNA splicing. Phosphorylates SRSF1 and SRSF3. Required for the regulation of alternative splicing of MAPT/TAU. Regulates the alternative splicing of tissue factor (F3) pre-mRNA in endothelial cells. This chain is Dual specificity protein kinase CLK4 (Clk4), found in Mus musculus (Mouse).